The following is a 438-amino-acid chain: Transcriptional enhancer factor TEF-3 (438 aa).

The segment covering methionine 1 to glycine 18 has biased composition (polar residues). 2 disordered regions span residues methionine 1–serine 36 and glutamine 195–alanine 217. The TEA DNA-binding region spans aspartate 28–glutamate 104. Over residues serine 205–proline 216 the composition is skewed to low complexity.

As to expression, enriched in cardiac and skeletal muscle.

The protein resides in the nucleus. Functionally, transcription factor which plays a key role in the Hippo signaling pathway, a pathway involved in organ size control and tumor suppression by restricting proliferation and promoting apoptosis. The core of this pathway is composed of a kinase cascade wherein MST1/MST2, in complex with its regulatory protein SAV1, phosphorylates and activates LATS1/2 in complex with its regulatory protein MOB1, which in turn phosphorylates and inactivates YAP1 oncoprotein and WWTR1/TAZ. Binds m-cat elements from muscle-specific promoters and differentially activate transcription. Isoform B has probably a transactivation capacity that is lacking in the other isoforms. Isoform D may be defective in DNA binding. In Gallus gallus (Chicken), this protein is Transcriptional enhancer factor TEF-3 (TEAD4).